The primary structure comprises 648 residues: Mitochondrial Rho GTPase 1 (648 aa).

Over 1–619 (MARYAAGAVD…KHYNRLINRS (619 aa)) the chain is Cytoplasmic. Ser-14 carries the post-translational modification Phosphoserine. Residues 15–182 (PKSVRIVVVG…FYYAQKTVLH (168 aa)) form the Miro 1 domain. EF-hand domains follow at residues 198 to 233 (RCVR…CFHA) and 319 to 354 (AAID…APES). Ca(2+) is bound by residues Asp-211, Asp-213, Asp-215, Glu-222, Asp-332, Asp-334, Asp-336, Asn-338, and Glu-343. The region spanning 427 to 595 (RKVFQCFVFG…FRKILTAAQH (169 aa)) is the Miro 2 domain. The chain crosses the membrane as a helical span at residues 620 to 640 (LMAVSIGAAAVVVGLAAYRVY). Residues 641–648 (ATRKSSSA) lie on the Mitochondrial intermembrane side of the membrane.

The protein belongs to the mitochondrial Rho GTPase family. Expressed in roots, leaves, stems, flowers and siliques.

It localises to the mitochondrion outer membrane. Mitochondrial GTPase required to maintain proper development, morphology and intracellular distribution of mitochondria, which in turn are essential for the progress of embryonic cell division, development of haploid male and female gametes, and pollen tube growth. The polypeptide is Mitochondrial Rho GTPase 1 (Arabidopsis thaliana (Mouse-ear cress)).